A 173-amino-acid chain; its full sequence is Shikimate kinase 1 (173 aa).

14–19 (GAGKST) is an ATP binding site. Mg(2+) is bound at residue Ser-18. The substrate site is built by Asp-36, Arg-60, and Gly-82. Residue Arg-120 participates in ATP binding. Arg-140 contributes to the substrate binding site. Position 157 (Gln-157) interacts with ATP.

The protein belongs to the shikimate kinase family. Monomer. Requires Mg(2+) as cofactor.

The protein localises to the cytoplasm. It catalyses the reaction shikimate + ATP = 3-phosphoshikimate + ADP + H(+). Its pathway is metabolic intermediate biosynthesis; chorismate biosynthesis; chorismate from D-erythrose 4-phosphate and phosphoenolpyruvate: step 5/7. Its function is as follows. Catalyzes the specific phosphorylation of the 3-hydroxyl group of shikimic acid using ATP as a cosubstrate. This Escherichia fergusonii (strain ATCC 35469 / DSM 13698 / CCUG 18766 / IAM 14443 / JCM 21226 / LMG 7866 / NBRC 102419 / NCTC 12128 / CDC 0568-73) protein is Shikimate kinase 1.